Here is a 294-residue protein sequence, read N- to C-terminus: Cytidine deaminase (294 aa).

2 consecutive CMP/dCMP-type deaminase domains span residues 48–168 (DEDA…FGPK) and 186–294 (LTGD…TLLA). 89–91 (NME) is a binding site for substrate. A Zn(2+)-binding site is contributed by H102. E104 acts as the Proton donor in catalysis. Zn(2+) is bound by residues C129 and C132.

This sequence belongs to the cytidine and deoxycytidylate deaminase family. As to quaternary structure, homodimer. Requires Zn(2+) as cofactor.

The catalysed reaction is cytidine + H2O + H(+) = uridine + NH4(+). It carries out the reaction 2'-deoxycytidine + H2O + H(+) = 2'-deoxyuridine + NH4(+). In terms of biological role, this enzyme scavenges exogenous and endogenous cytidine and 2'-deoxycytidine for UMP synthesis. This chain is Cytidine deaminase, found in Enterobacter sp. (strain 638).